Consider the following 304-residue polypeptide: Dihydroorotate dehydrogenase B (NAD(+)), catalytic subunit (304 aa).

Residues serine 21 and 45–46 (KA) each bind FMN. Substrate is bound by residues lysine 45 and 69 to 73 (NAIGL). Asparagine 99 and asparagine 127 together coordinate FMN. Asparagine 127 lines the substrate pocket. Cysteine 130 (nucleophile) is an active-site residue. Lysine 165 and isoleucine 191 together coordinate FMN. Substrate is bound at residue 192–193 (NT). Residues glycine 217, 243-244 (GG), and 265-266 (GT) contribute to the FMN site.

Belongs to the dihydroorotate dehydrogenase family. Type 1 subfamily. In terms of assembly, heterotetramer of 2 PyrK and 2 PyrD type B subunits. FMN is required as a cofactor.

It localises to the cytoplasm. The enzyme catalyses (S)-dihydroorotate + NAD(+) = orotate + NADH + H(+). It participates in pyrimidine metabolism; UMP biosynthesis via de novo pathway; orotate from (S)-dihydroorotate (NAD(+) route): step 1/1. In terms of biological role, catalyzes the conversion of dihydroorotate to orotate with NAD(+) as electron acceptor. The protein is Dihydroorotate dehydrogenase B (NAD(+)), catalytic subunit (pyrD) of Listeria monocytogenes serotype 4a (strain HCC23).